Reading from the N-terminus, the 96-residue chain is MGSSKLLVAFTLIVMMTISYDLFTGIGIDARTVPPTCYESCNATFQNPECNKMCVGLAYKDGSCIYPPPEVDGLPPKRPYFPRCCCNPIILSPPSP.

The N-terminal stretch at 1–19 (MGSSKLLVAFTLIVMMTIS) is a signal peptide. 4 disulfide bridges follow: Cys-37/Cys-86, Cys-41/Cys-64, Cys-50/Cys-84, and Cys-54/Cys-85.

This sequence belongs to the DEFL family.

The protein localises to the secreted. The protein is Defensin-like protein 69 of Arabidopsis thaliana (Mouse-ear cress).